The chain runs to 880 residues: MPSLNEIRSTFLDYFGKADHAVTPSAPLVPQNDPTLLFVNAGMVPFKNVFTGAETPAHPRAASSQKCVRAGGKHNDLDNVGYTARHHTFFEMLGNFSFGDYFKEQAILHAWTLLTAEFKLPKDKLLVTVYHTDDEAADLWKKIAGLGDDRIIRIPTSDNFWSMGDTGPCGPCSEIFFDHGPHIAGGPPGSPDEDGDRFIEIWNLVFMQFEQLAGGERISLPKPSIDTGMGLERIAAVLQGQHDNYDIDLFKALIAASVELTGVKAEGAQAPSHRVIADHLRSSSFLLADGVSPSNEGRGYVLRRIMRRAMRHAYLLGASEPLMHRLAPTLVREMGQAYPELRRAEALIVETLRQEEERFRTTLGRGMGLLDEATANLAAGGVLDGETAFKLYDTYGFPLDLTQDAVRAKGLTVDTDAFDAAMQKQREMARANWAGSGQQGAAAAWFSIKEKAGATDFVGYETTETTGVVKAIVVDGAEVESASAGQTVEVLLDRTSFYAESGGQAGDTGVIEAHGRESRVLDTQKQAGELHVHRVELASDLKVGDQVVASVDADRRNTTRSNHSAAHLVHAALHHVLGPHVAQKGQMVDGERMRFDFSHGGPLTAEELDRIEAEVNEVIRQNVPAETKEMAPQEAIEAGAVALFGEKYGDSVRVLTLGKSLADEAKAYSVELCGGTHVARTGDIALFKIVSEQGVAAGVRRIEALTGEAARRFLLDQAGVAKALADQFKTPVAEVATRVDALIADRKRLEKELAEAKKQLALGGGGAASGPEDVNGTALIARVLDGVGGKELRGVAEEFKKQLASGVVALVGTSDGKAAVTVAVTADLTGKFSAADLAKAAVIAMGGQGAGGKADFAQGGAPDDSKAEEGLAAVKALLAG.

Zn(2+) is bound by residues histidine 563, histidine 567, cysteine 673, and histidine 677.

This sequence belongs to the class-II aminoacyl-tRNA synthetase family. Zn(2+) serves as cofactor.

The protein resides in the cytoplasm. The catalysed reaction is tRNA(Ala) + L-alanine + ATP = L-alanyl-tRNA(Ala) + AMP + diphosphate. Functionally, catalyzes the attachment of alanine to tRNA(Ala) in a two-step reaction: alanine is first activated by ATP to form Ala-AMP and then transferred to the acceptor end of tRNA(Ala). Also edits incorrectly charged Ser-tRNA(Ala) and Gly-tRNA(Ala) via its editing domain. The polypeptide is Alanine--tRNA ligase (Caulobacter vibrioides (strain ATCC 19089 / CIP 103742 / CB 15) (Caulobacter crescentus)).